The sequence spans 348 residues: Zinc finger and SCAN domain-containing protein 16 (348 aa).

The SCAN box domain maps to 41–123; that stretch reads RQHFRKLCYQ…TVLEDLEREL (83 aa). Disordered regions lie at residues 160–184 and 205–226; these read PKKT…TKNE and RLNK…EGRS. Over residues 163 to 184 the composition is skewed to basic and acidic residues; sequence TQLEQEAGKPQRNGDKTRTKNE. 4 C2H2-type zinc fingers span residues 236 to 258, 264 to 286, 292 to 314, and 320 to 342; these read YKCD…RRTH, YKCD…HRVH, YKCK…QRIH, and YECD…QRIH.

It belongs to the krueppel C2H2-type zinc-finger protein family.

Its subcellular location is the nucleus. Functionally, may be involved in transcriptional regulation. The protein is Zinc finger and SCAN domain-containing protein 16 (ZSCAN16) of Homo sapiens (Human).